The chain runs to 1737 residues: Intraflagellar transport protein osm-1 (1737 aa).

7 WD repeats span residues 14 to 53 (DGEAKISNISCSPNGSRAAIACSDRSVALLDENGVQKDRF), 63 to 103 (GKKS…NEKK), 110 to 150 (VQPS…SLYK), 151 to 189 (TDETVVSIQTHPKRTSFVSAHQDGSIILYNFSSRTQSKI), 191 to 229 (TLQVPPYNLVFTNHGLVVATSDRRVLSYTENGVVQQQFD), 233 to 273 (QSEK…WDEG), and 511 to 553 (DQRS…EQVT). 7 TPR repeats span residues 700–737 (NDTESAIGMYTSLHKWDEALELAKVLNYPEYEQLKTSY), 803–836 (SQLYDKAGDVYEKLKDFDKAVEYFKKGDAYGKAI), 848–881 (VTLEQEWGLHLEYIGQYDAAVNHFVEANDLKKAV), 907–940 (TGYYGEIADHYSNKGDFERAERLFVEAGLFNDAI), 979–1012 (HGRFAEAEQLYITIGMPHKAIQMYDRVGRDDDVL), 1037–1070 (RGDLKAAEEQFLKAGDFRSAVNMYKDSEMWSDAY), and 1137–1170 (GTVHVRLATQLEEEGRLEDASKHYVEGNKPELAV).

The protein belongs to the IFT172 family. In terms of assembly, component of the IFT complex B composed of at least che-2, che-13, dyf-1, dyf-3, dyf-6, dyf-11, dyf-13, ift-20, ift-74, ift-81, ifta-2, osm-1, osm-5 and osm-6. Expressed in amphid and phasmid chemosensory neurons, where it appears to concentrate at the base of the transition zones, which correspond to the basal bodies of motile and sensory cilia. Moves in the retrograde direction along cilia and dendrites, suggesting that it is retrieved from the distal endings of the cilia by a retrograde transport pathway that moves it along cilia and then dendrites, back to the neuronal cell body.

It is found in the cell projection. The protein resides in the cilium. Its function is as follows. Component of the intraflagellar transport (IFT) complex B required for transport of proteins in the motile cilium. May be required for ciliary entrance and transport of specific ciliary cargo proteins such as che-3 which are related to motility. Required for the maintenance and formation of chemosensory cilia that detect chemosensory cues. The sequence is that of Intraflagellar transport protein osm-1 from Caenorhabditis elegans.